Here is a 239-residue protein sequence, read N- to C-terminus: Putative transcriptional regulator of 2-aminoethylphosphonate degradation operons (239 aa).

The region spanning 8 to 76 (IPQYLLIKAQ…DRRGWFVTPE (69 aa)) is the HTH gntR-type domain. A DNA-binding region (H-T-H motif) is located at residues 36–55 (ERELCAIFNTTRITIRESLA).

The polypeptide is Putative transcriptional regulator of 2-aminoethylphosphonate degradation operons (phnR) (Salmonella paratyphi A (strain ATCC 9150 / SARB42)).